Here is a 582-residue protein sequence, read N- to C-terminus: Membrane-bound O-acyltransferase GUP1 (582 aa).

The Extracellular segment spans residues M1–R61. A helical membrane pass occupies residues W62 to F82. At K83–R121 the chain is on the cytoplasmic side. The chain crosses the membrane as a helical span at residues F122 to I144. Topologically, residues N145–D158 are extracellular. A helical membrane pass occupies residues F159–I179. The Cytoplasmic segment spans residues H180–K195. A helical membrane pass occupies residues L196 to G216. Over N217–N294 the chain is Extracellular. Residues I295–T315 form a helical membrane-spanning segment. Topologically, residues F316 to R343 are cytoplasmic. Residues F344 to S364 traverse the membrane as a helical segment. The Extracellular segment spans residues K365–L373. The helical transmembrane segment at P374–I394 threads the bilayer. The Cytoplasmic portion of the chain corresponds to P395 to R454. 2 consecutive transmembrane segments (helical) span residues I455–L475 and L476–F496. The active site involves H469. Residues K497 to H507 are Cytoplasmic-facing. Residues L508–F528 form a helical membrane-spanning segment. Residues C529 to G548 lie on the Extracellular side of the membrane. The helical transmembrane segment at V549 to I569 threads the bilayer. Residues R570–C582 are Cytoplasmic-facing.

Belongs to the membrane-bound acyltransferase family.

It is found in the cell membrane. The protein resides in the endoplasmic reticulum membrane. Its subcellular location is the mitochondrion membrane. Membrane-bound O-acyltransferase involved in the remodeling of glycosylphosphatidylinositol (GPI) anchors. Acts only on GPI-anchored proteins, but not on free GPI lipids. Also involved in lipid metabolism, having profound effects on sphingolipid-sterol-ordered domains integrity and assembly. Involved in cell integrity and apoptosis. In Candida tropicalis (Yeast), this protein is Membrane-bound O-acyltransferase GUP1 (GUP1).